The primary structure comprises 309 residues: Homoserine kinase (309 aa).

P91–C101 is an ATP binding site.

This sequence belongs to the GHMP kinase family. Homoserine kinase subfamily.

The protein localises to the cytoplasm. It carries out the reaction L-homoserine + ATP = O-phospho-L-homoserine + ADP + H(+). It functions in the pathway amino-acid biosynthesis; L-threonine biosynthesis; L-threonine from L-aspartate: step 4/5. Functionally, catalyzes the ATP-dependent phosphorylation of L-homoserine to L-homoserine phosphate. The protein is Homoserine kinase of Buchnera aphidicola subsp. Acyrthosiphon pisum (strain APS) (Acyrthosiphon pisum symbiotic bacterium).